A 983-amino-acid chain; its full sequence is Ephrin type-A receptor 3 (983 aa).

An N-terminal signal peptide occupies residues 1–20; it reads MDCQLSILLLLSCSVLDSFG. Topologically, residues 21–541 are extracellular; that stretch reads ELIPQPSNEV…SFSISGESSQ (521 aa). An Eph LBD domain is found at 29 to 207; sequence EVNLLDSKTI…YFKKCPFTVK (179 aa). 5 N-linked (GlcNAc...) asparagine glycosylation sites follow: asparagine 232, asparagine 337, asparagine 391, asparagine 404, and asparagine 493. Fibronectin type-III domains lie at 325-435 and 436-531; these read PPSS…TNQA and APSP…TSPD. The chain crosses the membrane as a helical span at residues 542 to 565; the sequence is VVMIAISAAVAIILLTVVIYVLIG. The Cytoplasmic portion of the chain corresponds to 566–983; that stretch reads RFCGYKSKHG…TQSKNGPVPV (418 aa). 2 positions are modified to phosphotyrosine; by autocatalysis: tyrosine 596 and tyrosine 602. Residues 621–882 enclose the Protein kinase domain; that stretch reads ISIDKVVGAG…QIVSILDKLI (262 aa). ATP contacts are provided by residues 628–633, lysine 653, and 700–706; these read GAGEFG and EYMENGS. Tyrosine 701 carries the post-translational modification Phosphotyrosine; by autocatalysis. Aspartate 746 acts as the Proton acceptor in catalysis. 750–751 provides a ligand contact to ATP; the sequence is RN. Residue tyrosine 779 is modified to Phosphotyrosine; by autocatalysis. In terms of domain architecture, SAM spans 911-975; the sequence is TTFRTTGDWL…ISSIKALETQ (65 aa). Phosphotyrosine is present on tyrosine 937. Positions 981-983 match the PDZ-binding motif; the sequence is VPV.

The protein belongs to the protein kinase superfamily. Tyr protein kinase family. Ephrin receptor subfamily. As to quaternary structure, heterotetramer upon binding of the ligand. The heterotetramer is composed of an ephrin dimer and a receptor dimer. Oligomerization is probably required to induce biological responses. Forms a ternary EFNA5-EPHA3-ADAM10 complex mediating EFNA5 extracellular domain shedding by ADAM10 which regulates the EFNA5-EPHA3 complex internalization and function. Interacts with NCK1 (via SH2 domain); mediates EFNA5-EPHA3 signaling. Interacts (phosphorylated) with PTPN1; dephosphorylates EPHA3 and may regulate its trafficking and function. Interacts (phosphorylated) with CRK; mediates EFNA5-EPHA3 signaling through RHOA GTPase activation. In terms of processing, autophosphorylates upon activation by EFNA5. Phosphorylation on Tyr-602 mediates interaction with NCK1. Dephosphorylated by PTPN1. In terms of tissue distribution, widely expressed. Highest level in placenta.

The protein localises to the cell membrane. It is found in the secreted. The catalysed reaction is L-tyrosyl-[protein] + ATP = O-phospho-L-tyrosyl-[protein] + ADP + H(+). Receptor tyrosine kinase which binds promiscuously membrane-bound ephrin family ligands residing on adjacent cells, leading to contact-dependent bidirectional signaling into neighboring cells. The signaling pathway downstream of the receptor is referred to as forward signaling while the signaling pathway downstream of the ephrin ligand is referred to as reverse signaling. Highly promiscuous for ephrin-A ligands it binds preferentially EFNA5. Upon activation by EFNA5 regulates cell-cell adhesion, cytoskeletal organization and cell migration. Plays a role in cardiac cells migration and differentiation and regulates the formation of the atrioventricular canal and septum during development probably through activation by EFNA1. Involved in the retinotectal mapping of neurons. May also control the segregation but not the guidance of motor and sensory axons during neuromuscular circuit development. The sequence is that of Ephrin type-A receptor 3 (EPHA3) from Homo sapiens (Human).